The following is a 621-amino-acid chain: tRNA uridine 5-carboxymethylaminomethyl modification enzyme MnmG (621 aa).

Position 17-22 (17-22) interacts with FAD; the sequence is GGGHAG. 276 to 290 contacts NAD(+); that stretch reads GPRYCPSIEDKIMKF.

It belongs to the MnmG family. Homodimer. Heterotetramer of two MnmE and two MnmG subunits. FAD is required as a cofactor.

The protein resides in the cytoplasm. Its function is as follows. NAD-binding protein involved in the addition of a carboxymethylaminomethyl (cmnm) group at the wobble position (U34) of certain tRNAs, forming tRNA-cmnm(5)s(2)U34. This Zymomonas mobilis subsp. mobilis (strain ATCC 31821 / ZM4 / CP4) protein is tRNA uridine 5-carboxymethylaminomethyl modification enzyme MnmG.